The primary structure comprises 202 residues: CASP-like protein 1U4 (202 aa).

Topologically, residues 1–10 are cytoplasmic; the sequence is MCLPAKWLHP. Residues 11-31 form a helical membrane-spanning segment; sequence VSLIFRVAGIGLAAVSAAAML. At 32–56 the chain is on the extracellular side; the sequence is TASQCTVYADYGWRPRTVTYSDFPA. A helical transmembrane segment spans residues 57 to 77; sequence FVYLVAATAIATLLEAVALFL. Residues 78–94 lie on the Cytoplasmic side of the membrane; the sequence is SWSKKGKSKKSWRVLTM. Residues 95-115 traverse the membrane as a helical segment; that stretch reads LLLGAVVPALLYTSAGAAFAV. The Extracellular segment spans residues 116 to 146; sequence GWEDIYYYLEPIGRRFSVCRSSVAGGRFCEH. A helical transmembrane segment spans residues 147–167; that stretch reads VHVSMWLALGAAVAVSFAEFL. Topologically, residues 168-202 are cytoplasmic; sequence TTFRWCHGSGSCSDSDSDSDSDSESGCGHGCHCKH.

It belongs to the Casparian strip membrane proteins (CASP) family. As to quaternary structure, homodimer and heterodimers.

It is found in the cell membrane. The chain is CASP-like protein 1U4 from Sorghum bicolor (Sorghum).